The primary structure comprises 165 residues: ATP synthase subunit b (165 aa).

Residues 7–27 (STTIGDIIIVSGSVLLLFILI) form a helical membrane-spanning segment.

The protein belongs to the ATPase B chain family. F-type ATPases have 2 components, F(1) - the catalytic core - and F(0) - the membrane proton channel. F(1) has five subunits: alpha(3), beta(3), gamma(1), delta(1), epsilon(1). F(0) has three main subunits: a(1), b(2) and c(10-14). The alpha and beta chains form an alternating ring which encloses part of the gamma chain. F(1) is attached to F(0) by a central stalk formed by the gamma and epsilon chains, while a peripheral stalk is formed by the delta and b chains.

The protein localises to the cell membrane. F(1)F(0) ATP synthase produces ATP from ADP in the presence of a proton or sodium gradient. F-type ATPases consist of two structural domains, F(1) containing the extramembraneous catalytic core and F(0) containing the membrane proton channel, linked together by a central stalk and a peripheral stalk. During catalysis, ATP synthesis in the catalytic domain of F(1) is coupled via a rotary mechanism of the central stalk subunits to proton translocation. In terms of biological role, component of the F(0) channel, it forms part of the peripheral stalk, linking F(1) to F(0). In Streptococcus agalactiae serotype Ia (strain ATCC 27591 / A909 / CDC SS700), this protein is ATP synthase subunit b.